The primary structure comprises 542 residues: Excitatory amino acid transporter 1 (542 aa).

The Cytoplasmic segment spans residues 1–47 (MTKSNGEEPKMGGRMERFQQGVRKRTLLAKKKVQNITKEDVKSYLFR). A helical transmembrane segment spans residues 48–68 (NAFVLLTVTAVIVGTILGFTL). At 69-86 (RPYRMSYREVKYFSFPGE) the chain is on the extracellular side. Residues 87–108 (LLMRMLQMLVLPLIISSLVTGM) traverse the membrane as a helical segment. The Cytoplasmic portion of the chain corresponds to 109–122 (AALDSKASGKMGMR). The helical transmembrane segment at 123–145 (AVVYYMTTTIIAVVIGIIIVIII) threads the bilayer. Over 146–236 (HPGKGTKENM…ITEELVPVPG (91 aa)) the chain is Extracellular. A helical transmembrane segment spans residues 237-260 (SVNGVNALGLVVFSMCFGFVIGNM). The Cytoplasmic segment spans residues 261-269 (KEQGQALRE). The chain crosses the membrane as a helical span at residues 270 to 297 (FFDSLNEAIMRLVAVIMWYAPVGILFLI). Residues 298–318 (AGKIVEMEDMGVIGGQLAMYT) are Extracellular-facing. A helical transmembrane segment spans residues 319 to 340 (VTVIVGLLIHAVIVLPLLYFLV). Residues 341–345 (TRKNP) lie on the Cytoplasmic side of the membrane. An intramembrane region (discontinuously helical) is located at residues 346 to 376 (WVFIGGLLQALITALGTSSSSATLPITFKCL). Position 363–365 (363–365 (SSS)) interacts with L-aspartate. The Cytoplasmic segment spans residues 377 to 385 (EENNGVDKR). A helical transmembrane segment spans residues 386–412 (VTRFVLPVGATINMDGTALYEALAAIF). The Na(+) site is built by G394, T396, and N398. Position 402 (T402) interacts with L-aspartate. Residues 413 to 425 (IAQVNNFELNFGQ) lie on the Extracellular side of the membrane. The discontinuously helical intramembrane region spans 426-459 (IITISITATAASIGAAGIPQAGLVTMVIVLTSVG). 443-447 (IPQAG) provides a ligand contact to L-aspartate. The Extracellular segment spans residues 460–472 (LPTDDITLIIAVD). A helical transmembrane segment spans residues 473–494 (WFLDRLRTTTNVLGDSLGAGIV). L-aspartate contacts are provided by D476 and N483. N483 and D487 together coordinate Na(+). At 495-542 (EHLSRHELKNRDVEMGNSVIEENEMKKPYQLIAQDNETEKPIDSETKM) the chain is on the cytoplasmic side. S512 is subject to Phosphoserine.

It belongs to the dicarboxylate/amino acid:cation symporter (DAACS) (TC 2.A.23) family. SLC1A3 subfamily. In terms of assembly, homotrimer. In terms of processing, glycosylated. As to expression, detected in brain. Detected at very much lower levels in heart, lung, placenta and skeletal muscle. Highly expressed in cerebellum, but also found in frontal cortex, hippocampus and basal ganglia.

The protein resides in the cell membrane. It catalyses the reaction K(+)(in) + L-glutamate(out) + 3 Na(+)(out) + H(+)(out) = K(+)(out) + L-glutamate(in) + 3 Na(+)(in) + H(+)(in). The enzyme catalyses K(+)(in) + L-aspartate(out) + 3 Na(+)(out) + H(+)(out) = K(+)(out) + L-aspartate(in) + 3 Na(+)(in) + H(+)(in). The catalysed reaction is D-aspartate(out) + K(+)(in) + 3 Na(+)(out) + H(+)(out) = D-aspartate(in) + K(+)(out) + 3 Na(+)(in) + H(+)(in). Functionally, sodium-dependent, high-affinity amino acid transporter that mediates the uptake of L-glutamate and also L-aspartate and D-aspartate. Functions as a symporter that transports one amino acid molecule together with two or three Na(+) ions and one proton, in parallel with the counter-transport of one K(+) ion. Mediates Cl(-) flux that is not coupled to amino acid transport; this avoids the accumulation of negative charges due to aspartate and Na(+) symport. Plays a redundant role in the rapid removal of released glutamate from the synaptic cleft, which is essential for terminating the postsynaptic action of glutamate. This Homo sapiens (Human) protein is Excitatory amino acid transporter 1.